A 1500-amino-acid polypeptide reads, in one-letter code: Alpha-1-macroglobulin (1500 aa).

The signal sequence occupies residues 1–24 (MRRNQLPIPVFLLLLLLLPRDATA). A disulfide bridge links Cys48 with Cys86. Asn55, Asn61, and Asn157 each carry an N-linked (GlcNAc...) asparagine glycan. Disulfide bonds link Cys249/Cys298 and Cys267/Cys286. N-linked (GlcNAc...) asparagine glycosylation is found at Asn382 and Asn412. Residues Cys469 and Cys562 are joined by a disulfide bond. N-linked (GlcNAc...) asparagine glycosylation occurs at Asn568. 6 disulfides stabilise this stretch: Cys594–Cys785, Cys642–Cys689, Cys835–Cys863, Cys861–Cys897, Cys935–Cys1344, and Cys1094–Cys1142. The interval 686 to 746 (PRYCPMYQAY…QEVEVRETVR (61 aa)) is bait region. N-linked (GlcNAc...) asparagine glycans are attached at residues Asn883 and Asn944. The segment at residues 986 to 989 (CGEQ) is a cross-link (isoglutamyl cysteine thioester (Cys-Gln)). N-linked (GlcNAc...) asparagine glycosylation is present at Asn1005. The receptor-binding domain stretch occupies residues 1360-1500 (EGEAPFTLKV…FSSDSEQGNA (141 aa)). N-linked (GlcNAc...) asparagine glycosylation is found at Asn1390 and Asn1448.

It belongs to the protease inhibitor I39 (alpha-2-macroglobulin) family. In terms of assembly, homotetramer; disulfide-linked. In terms of tissue distribution, widely expressed. Highest level in ovary, testis, uterus and prostate. Protein found in plasma.

It localises to the secreted. Its function is as follows. Is able to inhibit all four classes of proteinases by a unique 'trapping' mechanism. This protein has a peptide stretch, called the 'bait region' which contains specific cleavage sites for different proteinases. When a proteinase cleaves the bait region, a conformational change is induced in the protein which traps the proteinase. The entrapped enzyme remains active against low molecular weight substrates (activity against high molecular weight substrates is greatly reduced). Following cleavage in the bait region a thioester bond is hydrolyzed and mediates the covalent binding of the protein to the proteinase. The protein is Alpha-1-macroglobulin of Rattus norvegicus (Rat).